The chain runs to 693 residues: Elongation factor G (693 aa).

The 275-residue stretch at 9–283 (ERVRNIGIIA…AVCDYLPSPL (275 aa)) folds into the tr-type G domain. Residues 18-25 (AHIDAGKT), 82-86 (DTPGH), and 136-139 (NKMD) contribute to the GTP site.

The protein belongs to the TRAFAC class translation factor GTPase superfamily. Classic translation factor GTPase family. EF-G/EF-2 subfamily.

Its subcellular location is the cytoplasm. In terms of biological role, catalyzes the GTP-dependent ribosomal translocation step during translation elongation. During this step, the ribosome changes from the pre-translocational (PRE) to the post-translocational (POST) state as the newly formed A-site-bound peptidyl-tRNA and P-site-bound deacylated tRNA move to the P and E sites, respectively. Catalyzes the coordinated movement of the two tRNA molecules, the mRNA and conformational changes in the ribosome. The polypeptide is Elongation factor G (Dehalococcoides mccartyi (strain ATCC BAA-2100 / JCM 16839 / KCTC 5957 / BAV1)).